Reading from the N-terminus, the 500-residue chain is NAD(P)H-quinone oxidoreductase chain 4, chloroplastic (500 aa).

A run of 14 helical transmembrane segments spans residues F4–L24, I37–L57, L80–A100, L113–S130, L134–M154, F167–L187, A208–I228, H242–V262, A272–A292, I305–D325, G330–G350, L386–T406, I416–M436, and I462–V482.

The protein belongs to the complex I subunit 4 family.

The protein localises to the plastid. Its subcellular location is the chloroplast thylakoid membrane. The catalysed reaction is a plastoquinone + NADH + (n+1) H(+)(in) = a plastoquinol + NAD(+) + n H(+)(out). It carries out the reaction a plastoquinone + NADPH + (n+1) H(+)(in) = a plastoquinol + NADP(+) + n H(+)(out). The chain is NAD(P)H-quinone oxidoreductase chain 4, chloroplastic from Nuphar advena (Common spatterdock).